The sequence spans 206 residues: Guanylate kinase (206 aa).

In terms of domain architecture, Guanylate kinase-like spans 7 to 185 (GIVLVLCAPS…AYDELRAAYL (179 aa)). 14–21 (APSGTGKT) lines the ATP pocket.

The protein belongs to the guanylate kinase family.

It is found in the cytoplasm. The catalysed reaction is GMP + ATP = GDP + ADP. Its function is as follows. Essential for recycling GMP and indirectly, cGMP. This is Guanylate kinase from Oleidesulfovibrio alaskensis (strain ATCC BAA-1058 / DSM 17464 / G20) (Desulfovibrio alaskensis).